Here is a 394-residue protein sequence, read N- to C-terminus: Elongation factor Tu (394 aa).

Residues 10-204 (KTHLNVGTIG…TLDTYIEDPV (195 aa)) form the tr-type G domain. The interval 19–26 (GHVDHGKT) is G1. 19 to 26 (GHVDHGKT) contributes to the GTP binding site. T26 lines the Mg(2+) pocket. A G2 region spans residues 60–64 (GITIK). Residues 81–84 (DCPG) are G3. GTP-binding positions include 81 to 85 (DCPGH) and 136 to 139 (NKCD). The segment at 136 to 139 (NKCD) is G4. The segment at 174–176 (SAL) is G5.

Belongs to the TRAFAC class translation factor GTPase superfamily. Classic translation factor GTPase family. EF-Tu/EF-1A subfamily. In terms of assembly, monomer.

Its subcellular location is the cytoplasm. The catalysed reaction is GTP + H2O = GDP + phosphate + H(+). Its function is as follows. GTP hydrolase that promotes the GTP-dependent binding of aminoacyl-tRNA to the A-site of ribosomes during protein biosynthesis. The sequence is that of Elongation factor Tu from Aster yellows witches'-broom phytoplasma (strain AYWB).